The sequence spans 292 residues: MGKPRQNPSTLVSTLCEAEPKGKLWVNGYAGTQGTRDATLQTRLIPLSFHLQRGKGLAAPLSALSAPRLPERPADGRVAVDAQPAARSMDSDSGEQSEGEPVTAAGPDVFSSKSLALQAQKKILSKIASKTVANMLIDDTSSEIFDELYKVTKEHTHNKKEAHKIMKDLIKVAIKIGILYRNNQFSQEELVIVEKFRKKLNQTAMTIVSFYEVEYTFDRNVLSNLLHECKDLVHELVQRHLTPRTHGRINHVFNHFADVEFLSTLYSLDGDCRPNLKRICEGINKLLDEKVL.

Residues 81–107 are disordered; that stretch reads DAQPAARSMDSDSGEQSEGEPVTAAGP. The tract at residues 109-292 is binding to phosphoinositides; that stretch reads VFSSKSLALQ…INKLLDEKVL (184 aa).

It belongs to the TNFAIP8 family. In terms of tissue distribution, widely expressed (at protein level). Highly expressed in most carcinoma cell lines.

The protein localises to the cytoplasm. It is found in the cell membrane. Acts as a lipid transfer protein. Preferentially captures and shuttles two lipid second messengers, i.e., phosphatidylinositol 4,5- bisphosphate and phosphatidylinositol 3,4,5-trisphosphate and increases their levels in the plasma membrane. Additionally, may also function as a lipid-presenting protein to enhance the activity of the PI3K-AKT and MEK-ERK pathways. May act as a regulator of tumorigenesis through its activation of phospholipid signaling. This Homo sapiens (Human) protein is Tumor necrosis factor alpha-induced protein 8-like protein 3 (TNFAIP8L3).